The following is a 912-amino-acid chain: Coiled-coil domain-containing protein 162 (912 aa).

Coiled coils occupy residues 1–35 (MFKS…FSFA) and 220–276 (VLLG…VVMS).

This chain is Coiled-coil domain-containing protein 162, found in Mus musculus (Mouse).